A 353-amino-acid chain; its full sequence is Photosystem II protein D1 (353 aa).

Position 2 is an N-acetylthreonine (Thr2). Thr2 carries the phosphothreonine modification. Helical transmembrane passes span 29 to 46 (YIGW…TATS), 118 to 133 (HFLL…EWEL), and 142 to 156 (WIAV…AATA). His118 provides a ligand contact to chlorophyll a. Position 126 (Tyr126) interacts with pheophytin a. Residues Asp170 and Glu189 each coordinate [CaMn4O5] cluster. Residues 197-218 (FHMLGVAGVFGGSLFSAMHGSL) traverse the membrane as a helical segment. His198 serves as a coordination point for chlorophyll a. A quinone-binding positions include His215 and 264-265 (SF). Fe cation is bound at residue His215. His272 is a binding site for Fe cation. Residues 274–288 (FLAAWPVVGIWFTAL) traverse the membrane as a helical segment. Residues His332, Glu333, Asp342, and Ala344 each contribute to the [CaMn4O5] cluster site. The propeptide occupies 345 to 353 (ALEVPYLNG).

Belongs to the reaction center PufL/M/PsbA/D family. PSII is composed of 1 copy each of membrane proteins PsbA, PsbB, PsbC, PsbD, PsbE, PsbF, PsbH, PsbI, PsbJ, PsbK, PsbL, PsbM, PsbT, PsbX, PsbY, PsbZ, Psb30/Ycf12, at least 3 peripheral proteins of the oxygen-evolving complex and a large number of cofactors. It forms dimeric complexes. The D1/D2 heterodimer binds P680, chlorophylls that are the primary electron donor of PSII, and subsequent electron acceptors. It shares a non-heme iron and each subunit binds pheophytin, quinone, additional chlorophylls, carotenoids and lipids. D1 provides most of the ligands for the Mn4-Ca-O5 cluster of the oxygen-evolving complex (OEC). There is also a Cl(-1) ion associated with D1 and D2, which is required for oxygen evolution. The PSII complex binds additional chlorophylls, carotenoids and specific lipids. serves as cofactor. Post-translationally, phosphorylated in both bundle sheath and mesophyll cells, phosphorylation increases when cells are grown under high rather than low light regimes (70 vs 900 umol photons/m-2/s). In terms of processing, PSII is subject to light-induced damage, in particular to D1. Damaged protein is degraded by Deg1 and FtsH proteases and replaced. In maize mesophyll cells D1 degradation is less extensive in grana (stacked) vs stroma (unstacked) lamellae, in part due to exclusion of FtsH from the grana. D1 degradation is faster in bundle sheath cells. Tyr-161 forms a radical intermediate that is referred to as redox-active TyrZ, YZ or Y-Z. Post-translationally, C-terminally processed by CTPA; processing is essential to allow assembly of the oxygen-evolving complex and thus photosynthetic growth.

It localises to the plastid. It is found in the chloroplast thylakoid membrane. It catalyses the reaction 2 a plastoquinone + 4 hnu + 2 H2O = 2 a plastoquinol + O2. Photosystem II (PSII) is a light-driven water:plastoquinone oxidoreductase that uses light energy to abstract electrons from H(2)O, generating O(2) and a proton gradient subsequently used for ATP formation. It consists of a core antenna complex that captures photons, and an electron transfer chain that converts photonic excitation into a charge separation. The D1/D2 (PsbA/PsbD) reaction center heterodimer binds P680, the primary electron donor of PSII as well as several subsequent electron acceptors. The protein is Photosystem II protein D1 of Zea mays (Maize).